Here is a 472-residue protein sequence, read N- to C-terminus: MAKRVKILVVGDLMLDHYIWGSCERISPEAPVQVVKINNETYTLGGAGNVVRNLLSLGANVSVASVLGDDEAGKKIKEKLAELNVKDELILTEKGRESSIKSRIMASHQQVVRIDKESVVKINLEDELVLKVKENLANFKAVLLSDYGKGVLSEKVCQEIINECVKLKIPVLIDPKGSDYSKYKNATLLTPNKKEASEATNLKIKDKAELEKAIKQLKEELNLTYSIITISEEGIALYDDKLHIFAAKAKEVFDVTGAGDTVLATLGYMLANGADIKEAIKIANLAAAVVVAKIGSATASFSEIEQLLNSSFGANFEHKLKSIEELEEILSQKGKKKVVFTNGCFDILHAGHVKYLARARELGDLLVVGLNSDASVKRLKGEARPINSQDDRACVLSGLGFVDYVVIFDEDTPLNLITKIKPDVLVKGADYKGKEVVGSDIVKEVRLIDFVEGKSTTGIIKRIKDAKNDDKK.

A ribokinase region spans residues 1–315; the sequence is MAKRVKILVV…QLLNSSFGAN (315 aa). An ATP-binding site is contributed by 192 to 195; that stretch reads NKKE. The active site involves Asp260. Residues 340–472 are cytidylyltransferase; it reads FTNGCFDILH…IKDAKNDDKK (133 aa).

In the N-terminal section; belongs to the carbohydrate kinase PfkB family. The protein in the C-terminal section; belongs to the cytidylyltransferase family. In terms of assembly, homodimer.

The catalysed reaction is D-glycero-beta-D-manno-heptose 7-phosphate + ATP = D-glycero-beta-D-manno-heptose 1,7-bisphosphate + ADP + H(+). The enzyme catalyses D-glycero-beta-D-manno-heptose 1-phosphate + ATP + H(+) = ADP-D-glycero-beta-D-manno-heptose + diphosphate. It participates in nucleotide-sugar biosynthesis; ADP-L-glycero-beta-D-manno-heptose biosynthesis; ADP-L-glycero-beta-D-manno-heptose from D-glycero-beta-D-manno-heptose 7-phosphate: step 1/4. Its pathway is nucleotide-sugar biosynthesis; ADP-L-glycero-beta-D-manno-heptose biosynthesis; ADP-L-glycero-beta-D-manno-heptose from D-glycero-beta-D-manno-heptose 7-phosphate: step 3/4. In terms of biological role, catalyzes the phosphorylation of D-glycero-D-manno-heptose 7-phosphate at the C-1 position to selectively form D-glycero-beta-D-manno-heptose-1,7-bisphosphate. Catalyzes the ADP transfer from ATP to D-glycero-beta-D-manno-heptose 1-phosphate, yielding ADP-D-glycero-beta-D-manno-heptose. This Campylobacter concisus (strain 13826) protein is Bifunctional protein HldE.